The primary structure comprises 611 residues: Elongation factor 1 alpha-like protein (611 aa).

2 disordered regions span residues 1-21 (MAYSDYSDGADDMPDFHDEGE) and 105-138 (SISQQRPNDRLPDWLDEEESEGERNGEEANDEKT). Position 124 is a phosphoserine (serine 124). Basic and acidic residues predominate over residues 126-138 (GERNGEEANDEKT). Residues 165–390 (LPHLSFVVLG…LENAAFKISK (226 aa)) form the tr-type G domain. A G1 region spans residues 174 to 181 (GHVDAGKS). GTP is bound at residue 174-181 (GHVDAGKS). A G2 region spans residues 230-234 (GVTVS). Positions 251-254 (DAPG) are G3. Residues 313–316 (NKMD) and 352–354 (SGF) contribute to the GTP site. The interval 313-316 (NKMD) is G4. Residues 352–354 (SGF) form a G5 region.

This sequence belongs to the TRAFAC class translation factor GTPase superfamily. Classic translation factor GTPase family. Component of the Dom34-Hbs1 complex, also named Pelota-HBS1L complex, composed of DOM34 and HBS1.

The protein resides in the cytoplasm. The enzyme catalyses GTP + H2O = GDP + phosphate + H(+). In terms of biological role, GTPase component of the Dom34-Hbs1 complex, a complex that recognizes stalled ribosomes and triggers the No-Go Decay (NGD) pathway. The Dom34-Hbs1 complex recognizes ribosomes stalled at the 3' end of an mRNA and engages stalled ribosomes by destabilizing mRNA in the mRNA channel. Following ribosome-binding, the Pelota-HBS1L complex promotes the disassembly of stalled ribosomes, followed by degradation of damaged mRNAs as part of the NGD pathway. The Dom34-Hbs1 complex is also involved in non-functional rRNA decay. In Saccharomyces cerevisiae (strain ATCC 204508 / S288c) (Baker's yeast), this protein is Elongation factor 1 alpha-like protein.